The chain runs to 212 residues: Lysozyme g-like protein 2 (212 aa).

The signal sequence occupies residues 1-19 (MLSSVVFWGLIALIGTSRG). 2 disulfide bridges follow: C39-C92 and C53-C61. E105 is a catalytic residue.

It belongs to the glycosyl hydrolase 23 family. In terms of tissue distribution, strong expression detected in the eye and weak expression in the testis. No expression is observed in any other tissues.

It localises to the secreted. Functionally, may act as a potent antibacterial protein that may play a role in the innate immunity. The protein is Lysozyme g-like protein 2 (LYG2) of Homo sapiens (Human).